Consider the following 350-residue polypeptide: tRNA uridine(34) hydroxylase (350 aa).

In terms of domain architecture, Rhodanese spans 146 to 240 (DDPDALFIDM…YARKAREQGL (95 aa)). Cysteine 200 serves as the catalytic Cysteine persulfide intermediate.

The protein belongs to the TrhO family.

The enzyme catalyses uridine(34) in tRNA + AH2 + O2 = 5-hydroxyuridine(34) in tRNA + A + H2O. In terms of biological role, catalyzes oxygen-dependent 5-hydroxyuridine (ho5U) modification at position 34 in tRNAs, the first step in 5-carboxymethoxyuridine (cmo5U) biosynthesis. May be part of an alternate pathway, which is able to bypass cmo5U biogenesis in a subset of tRNAs under aerobic conditions. In Escherichia coli O45:K1 (strain S88 / ExPEC), this protein is tRNA uridine(34) hydroxylase.